The chain runs to 368 residues: 4-hydroxy-3-methylbut-2-en-1-yl diphosphate synthase (flavodoxin) (368 aa).

Positions 271, 274, 306, and 313 each coordinate [4Fe-4S] cluster.

The protein belongs to the IspG family. The cofactor is [4Fe-4S] cluster.

It carries out the reaction (2E)-4-hydroxy-3-methylbut-2-enyl diphosphate + oxidized [flavodoxin] + H2O + 2 H(+) = 2-C-methyl-D-erythritol 2,4-cyclic diphosphate + reduced [flavodoxin]. Its pathway is isoprenoid biosynthesis; isopentenyl diphosphate biosynthesis via DXP pathway; isopentenyl diphosphate from 1-deoxy-D-xylulose 5-phosphate: step 5/6. Functionally, converts 2C-methyl-D-erythritol 2,4-cyclodiphosphate (ME-2,4cPP) into 1-hydroxy-2-methyl-2-(E)-butenyl 4-diphosphate. In Buchnera aphidicola subsp. Acyrthosiphon pisum (strain APS) (Acyrthosiphon pisum symbiotic bacterium), this protein is 4-hydroxy-3-methylbut-2-en-1-yl diphosphate synthase (flavodoxin).